A 707-amino-acid chain; its full sequence is Golgin candidate 1 (707 aa).

Over 1-664 the chain is Cytoplasmic; that stretch reads MASWLKAAED…RATRFLWRYP (664 aa). 3 disordered regions span residues 22-106, 121-196, and 234-256; these read VVED…EIHP, VADT…SKRD, and QEPK…ADTT. Over residues 38–47 the composition is skewed to low complexity; sequence SGRKGSQGKR. Residues 56–67 are compositionally biased toward basic and acidic residues; that stretch reads VKEESSNKRDSS. Residues 68 to 80 are compositionally biased toward polar residues; sequence GDQSGPGVSQSEV. The segment covering 83 to 95 has biased composition (low complexity); the sequence is SKSSVSTDETSSS. 3 stretches are compositionally biased toward basic and acidic residues: residues 139–150, 185–196, and 245–254; these read DGDRSESKHADG, TQRELDDSSKRD, and LKREQDRRAD. Coiled-coil stretches lie at residues 287 to 424 and 452 to 608; these read RVCA…NATK and ADER…KSRV. The helical; Signal-anchor for type II membrane protein transmembrane segment at 665 to 685 threads the bilayer; sequence IARMFLLFYLVFVHLFLMYLI. Topologically, residues 686–707 are lumenal; the sequence is HRLQEQAEAQEVAAMTNNVFRL.

It is found in the golgi apparatus membrane. In terms of biological role, golgi matrix protein playing a role in tethering of vesicles to Golgi membranes and in maintaining the overall structure of the Golgi apparatus. The sequence is that of Golgin candidate 1 (GC1) from Arabidopsis thaliana (Mouse-ear cress).